The sequence spans 426 residues: MKLQKPKGTQDILPVAAAKWQYVEGVARETFKQYHYGEIRTPMFEHYEVISRSVGDTTDIVTKEMYDFYDKGDRHITLRPEGTAPVVRSYVENKLFAPEVQKPVKLYYIGSMFRYERPQAGRLREFHQIGVECFGSANPATDVETIAMAYHLFERLGIKEVTLHLNSLGNAASRAAYRQALIDYLSPMRETLSKDSQRRLDENPLRVLDSKEKEDKIAVANAPSILDYLDEESQAHFDAVRSMLEVLAIPYVIDTNMVRGLDYYNHTIFEFITEVDQSELTICAGGRYDGLVEYFGGPATPGFGFGLGLERLLLILDKQGVELPVEEGLDVYIAVLGAYANVAALALTQAIRRQGFTVERDYLGRKIKAQFKSADAFKAKVVITLGESEIKTGQAVLKHNQTRQEMTVSFDQIQTNFASIFAECIQ.

This sequence belongs to the class-II aminoacyl-tRNA synthetase family. As to quaternary structure, homodimer.

It localises to the cytoplasm. The catalysed reaction is tRNA(His) + L-histidine + ATP = L-histidyl-tRNA(His) + AMP + diphosphate + H(+). In Streptococcus equi subsp. equi (strain 4047), this protein is Histidine--tRNA ligase.